Here is a 368-residue protein sequence, read N- to C-terminus: 4-hydroxy-3-methylbut-2-en-1-yl diphosphate synthase (flavodoxin) (368 aa).

The [4Fe-4S] cluster site is built by Cys271, Cys274, Cys306, and Glu313.

This sequence belongs to the IspG family. [4Fe-4S] cluster is required as a cofactor.

It carries out the reaction (2E)-4-hydroxy-3-methylbut-2-enyl diphosphate + oxidized [flavodoxin] + H2O + 2 H(+) = 2-C-methyl-D-erythritol 2,4-cyclic diphosphate + reduced [flavodoxin]. It participates in isoprenoid biosynthesis; isopentenyl diphosphate biosynthesis via DXP pathway; isopentenyl diphosphate from 1-deoxy-D-xylulose 5-phosphate: step 5/6. Functionally, converts 2C-methyl-D-erythritol 2,4-cyclodiphosphate (ME-2,4cPP) into 1-hydroxy-2-methyl-2-(E)-butenyl 4-diphosphate. The sequence is that of 4-hydroxy-3-methylbut-2-en-1-yl diphosphate synthase (flavodoxin) from Buchnera aphidicola subsp. Acyrthosiphon pisum (strain APS) (Acyrthosiphon pisum symbiotic bacterium).